The chain runs to 320 residues: 4-hydroxythreonine-4-phosphate dehydrogenase (320 aa).

Residue Thr-132 participates in substrate binding. A divalent metal cation is bound by residues His-161, His-205, and His-258. 3 residues coordinate substrate: Lys-266, Asn-275, and Arg-284.

Belongs to the PdxA family. As to quaternary structure, homodimer. A divalent metal cation serves as cofactor.

The protein resides in the cytoplasm. It catalyses the reaction 4-(phosphooxy)-L-threonine + NAD(+) = 3-amino-2-oxopropyl phosphate + CO2 + NADH. Its pathway is cofactor biosynthesis; pyridoxine 5'-phosphate biosynthesis; pyridoxine 5'-phosphate from D-erythrose 4-phosphate: step 4/5. Its function is as follows. Catalyzes the NAD(P)-dependent oxidation of 4-(phosphooxy)-L-threonine (HTP) into 2-amino-3-oxo-4-(phosphooxy)butyric acid which spontaneously decarboxylates to form 3-amino-2-oxopropyl phosphate (AHAP). The polypeptide is 4-hydroxythreonine-4-phosphate dehydrogenase (Aquifex aeolicus (strain VF5)).